The sequence spans 537 residues: CTP synthase (537 aa).

The interval 1–268 (MPFKCIFLTG…ANFIGEKLKL (268 aa)) is amidoligase domain. Residue serine 14 coordinates CTP. Residue serine 14 coordinates UTP. ATP-binding positions include 15 to 20 (SLGKGL) and aspartate 72. Mg(2+) contacts are provided by aspartate 72 and glutamate 142. CTP-binding positions include 149-151 (DIE), 188-193 (KSKPTQ), and lysine 224. Residues 188 to 193 (KSKPTQ) and lysine 224 contribute to the UTP site. Positions 293-533 (KIGVVGKYVQ…IEAALVYSKD (241 aa)) constitute a Glutamine amidotransferase type-1 domain. Glycine 352 is an L-glutamine binding site. Residue cysteine 379 is the Nucleophile; for glutamine hydrolysis of the active site. L-glutamine is bound by residues 380 to 383 (LGMQ), glutamate 403, and arginine 461. Residues histidine 506 and glutamate 508 contribute to the active site.

Belongs to the CTP synthase family. In terms of assembly, homotetramer.

The enzyme catalyses UTP + L-glutamine + ATP + H2O = CTP + L-glutamate + ADP + phosphate + 2 H(+). It catalyses the reaction L-glutamine + H2O = L-glutamate + NH4(+). It carries out the reaction UTP + NH4(+) + ATP = CTP + ADP + phosphate + 2 H(+). The protein operates within pyrimidine metabolism; CTP biosynthesis via de novo pathway; CTP from UDP: step 2/2. Its activity is regulated as follows. Allosterically activated by GTP, when glutamine is the substrate; GTP has no effect on the reaction when ammonia is the substrate. The allosteric effector GTP functions by stabilizing the protein conformation that binds the tetrahedral intermediate(s) formed during glutamine hydrolysis. Inhibited by the product CTP, via allosteric rather than competitive inhibition. Functionally, catalyzes the ATP-dependent amination of UTP to CTP with either L-glutamine or ammonia as the source of nitrogen. Regulates intracellular CTP levels through interactions with the four ribonucleotide triphosphates. In Chlamydia pneumoniae (Chlamydophila pneumoniae), this protein is CTP synthase.